Here is a 331-residue protein sequence, read N- to C-terminus: GTP 3',8-cyclase (331 aa).

The Radical SAM core domain maps to 9–233 (SFGRQVTYVR…TATNEHTGGP (225 aa)). Arg-18 contributes to the GTP binding site. 2 residues coordinate [4Fe-4S] cluster: Cys-25 and Cys-29. Tyr-31 contacts S-adenosyl-L-methionine. Cys-32 contributes to the [4Fe-4S] cluster binding site. Arg-67 contacts GTP. Position 71 (Gly-71) interacts with S-adenosyl-L-methionine. A GTP-binding site is contributed by Thr-98. Position 122 (Ser-122) interacts with S-adenosyl-L-methionine. Lys-159 contributes to the GTP binding site. Met-193 lines the S-adenosyl-L-methionine pocket. [4Fe-4S] cluster-binding residues include Cys-257 and Cys-260. 262 to 264 (RVR) is a GTP binding site. Cys-274 lines the [4Fe-4S] cluster pocket.

Belongs to the radical SAM superfamily. MoaA family. Monomer and homodimer. [4Fe-4S] cluster is required as a cofactor.

The catalysed reaction is GTP + AH2 + S-adenosyl-L-methionine = (8S)-3',8-cyclo-7,8-dihydroguanosine 5'-triphosphate + 5'-deoxyadenosine + L-methionine + A + H(+). It functions in the pathway cofactor biosynthesis; molybdopterin biosynthesis. Functionally, catalyzes the cyclization of GTP to (8S)-3',8-cyclo-7,8-dihydroguanosine 5'-triphosphate. The chain is GTP 3',8-cyclase from Saccharophagus degradans (strain 2-40 / ATCC 43961 / DSM 17024).